Reading from the N-terminus, the 76-residue chain is Exodeoxyribonuclease 7 small subunit (76 aa).

The protein belongs to the XseB family. In terms of assembly, heterooligomer composed of large and small subunits.

The protein localises to the cytoplasm. It carries out the reaction Exonucleolytic cleavage in either 5'- to 3'- or 3'- to 5'-direction to yield nucleoside 5'-phosphates.. Functionally, bidirectionally degrades single-stranded DNA into large acid-insoluble oligonucleotides, which are then degraded further into small acid-soluble oligonucleotides. The chain is Exodeoxyribonuclease 7 small subunit from Legionella pneumophila subsp. pneumophila (strain Philadelphia 1 / ATCC 33152 / DSM 7513).